The primary structure comprises 444 residues: Na(+)-translocating NADH-quinone reductase subunit A (444 aa).

The protein belongs to the NqrA family. In terms of assembly, composed of six subunits; NqrA, NqrB, NqrC, NqrD, NqrE and NqrF.

It catalyses the reaction a ubiquinone + n Na(+)(in) + NADH + H(+) = a ubiquinol + n Na(+)(out) + NAD(+). Functionally, NQR complex catalyzes the reduction of ubiquinone-1 to ubiquinol by two successive reactions, coupled with the transport of Na(+) ions from the cytoplasm to the periplasm. NqrA to NqrE are probably involved in the second step, the conversion of ubisemiquinone to ubiquinol. In Shewanella amazonensis (strain ATCC BAA-1098 / SB2B), this protein is Na(+)-translocating NADH-quinone reductase subunit A.